A 560-amino-acid chain; its full sequence is Leucine-rich repeat and IQ domain-containing protein 4 (560 aa).

Residues 1–20 form a disordered region; the sequence is MSKDIKSVEHSPKIHQRNDP. LRR repeat units lie at residues 23–47, 48–70, 72–95, 97–116, 117–140, 141–164, 166–187, 188–210, 212–233, 234–256, 258–281, 283–301, 302–325, 326–348, 350–371, 374–397, 398–422, 424–443, 444–466, and 468–489; these read VNDRTFFIDASNQSLTAIPLEIFTF, TELEEVHLENNQIEEIPQEIQRL, NIRVLYLDKNNLRSLCPALGLLSS, ESLDLSYNPIFSSSLVVVSF, LHALRELRLYQTDLKEIPVVIFKN, LHHLELLGLTGNHLKCLPKEIVNQ, KLREIYLKRNQFEVFPQELCVL, YTLEIIDLDENKIGAIPEEIGHL, GLQKFYMASNNLPVLPASLCQC, SQLSVLDLSHNLLHSIPKSFAEL, KMTEIGLSGNRLEKVPRLICRWTS, HLLYLGNTGLHRLRGSFRC, LVNLRFLDLSQNHLHHCPLQICAL, KNLEVLGLDDNKIGQLPSELGSL, KLKILGLTGNEFLSFPEEVLSL, LEKLYIGQDQGFKLTYVPEHIRKL, QSLKELYIENNHLEYLPVSLGSMPN, EVLDCRHNLLKQLPDAICQA, QALKELRLEDNLLTHLPENLDSL, and NLKVLTLMDNPMEEPPKEVCAE. Positions 504–533 constitute an IQ domain; the sequence is RNIMATKIQAWWRGTMVQRGFGKFGELLKP. The interval 529–560 is disordered; the sequence is ELLKPQKKGKTSPKDKKGKKDVKGKPGKGKKK. Over residues 533-560 the composition is skewed to basic residues; it reads PQKKGKTSPKDKKGKKDVKGKPGKGKKK.

This Homo sapiens (Human) protein is Leucine-rich repeat and IQ domain-containing protein 4 (LRRIQ4).